The following is a 319-amino-acid chain: Ornithine carbamoyltransferase (319 aa).

Carbamoyl phosphate-binding positions include 63-66 (STRT), Gln-90, Arg-114, and 141-144 (HPCQ). L-ornithine-binding positions include Asn-172, Asp-236, and 240–241 (SM). Residues 276–277 (CL) and Arg-304 contribute to the carbamoyl phosphate site.

It belongs to the aspartate/ornithine carbamoyltransferase superfamily. OTCase family.

It localises to the cytoplasm. It catalyses the reaction carbamoyl phosphate + L-ornithine = L-citrulline + phosphate + H(+). The protein operates within amino-acid biosynthesis; L-arginine biosynthesis; L-arginine from L-ornithine and carbamoyl phosphate: step 1/3. In terms of biological role, reversibly catalyzes the transfer of the carbamoyl group from carbamoyl phosphate (CP) to the N(epsilon) atom of ornithine (ORN) to produce L-citrulline. This is Ornithine carbamoyltransferase from Halalkalibacterium halodurans (strain ATCC BAA-125 / DSM 18197 / FERM 7344 / JCM 9153 / C-125) (Bacillus halodurans).